The following is a 206-amino-acid chain: Urease accessory protein UreG (206 aa).

12–19 (GPVGSGKT) contributes to the GTP binding site.

It belongs to the SIMIBI class G3E GTPase family. UreG subfamily. As to quaternary structure, homodimer. UreD, UreF and UreG form a complex that acts as a GTP-hydrolysis-dependent molecular chaperone, activating the urease apoprotein by helping to assemble the nickel containing metallocenter of UreC. The UreE protein probably delivers the nickel.

It is found in the cytoplasm. In terms of biological role, facilitates the functional incorporation of the urease nickel metallocenter. This process requires GTP hydrolysis, probably effectuated by UreG. In Synechocystis sp. (strain ATCC 27184 / PCC 6803 / Kazusa), this protein is Urease accessory protein UreG.